A 216-amino-acid chain; its full sequence is Thiamine-phosphate synthase (216 aa).

Residues 39–43 (QLRRK) and asparagine 71 each bind 4-amino-2-methyl-5-(diphosphooxymethyl)pyrimidine. Aspartate 72 and aspartate 91 together coordinate Mg(2+). Serine 109 lines the 4-amino-2-methyl-5-(diphosphooxymethyl)pyrimidine pocket. Residue 136 to 138 (SPT) coordinates 2-[(2R,5Z)-2-carboxy-4-methylthiazol-5(2H)-ylidene]ethyl phosphate. Residue lysine 139 participates in 4-amino-2-methyl-5-(diphosphooxymethyl)pyrimidine binding. 2-[(2R,5Z)-2-carboxy-4-methylthiazol-5(2H)-ylidene]ethyl phosphate is bound by residues glycine 172 and 192–193 (IT).

The protein belongs to the thiamine-phosphate synthase family. The cofactor is Mg(2+).

The catalysed reaction is 2-[(2R,5Z)-2-carboxy-4-methylthiazol-5(2H)-ylidene]ethyl phosphate + 4-amino-2-methyl-5-(diphosphooxymethyl)pyrimidine + 2 H(+) = thiamine phosphate + CO2 + diphosphate. The enzyme catalyses 2-(2-carboxy-4-methylthiazol-5-yl)ethyl phosphate + 4-amino-2-methyl-5-(diphosphooxymethyl)pyrimidine + 2 H(+) = thiamine phosphate + CO2 + diphosphate. It catalyses the reaction 4-methyl-5-(2-phosphooxyethyl)-thiazole + 4-amino-2-methyl-5-(diphosphooxymethyl)pyrimidine + H(+) = thiamine phosphate + diphosphate. Its pathway is cofactor biosynthesis; thiamine diphosphate biosynthesis; thiamine phosphate from 4-amino-2-methyl-5-diphosphomethylpyrimidine and 4-methyl-5-(2-phosphoethyl)-thiazole: step 1/1. In terms of biological role, condenses 4-methyl-5-(beta-hydroxyethyl)thiazole monophosphate (THZ-P) and 2-methyl-4-amino-5-hydroxymethyl pyrimidine pyrophosphate (HMP-PP) to form thiamine monophosphate (TMP). This is Thiamine-phosphate synthase from Bordetella avium (strain 197N).